The following is a 394-amino-acid chain: Elongation factor Tu (394 aa).

The tr-type G domain occupies 10-204; that stretch reads KPHVNVGTIG…HLDNYIPEPE (195 aa). Positions 19-26 are G1; it reads GHVDHGKT. GTP is bound at residue 19-26; the sequence is GHVDHGKT. T26 lines the Mg(2+) pocket. Residues 60-64 form a G2 region; the sequence is GITIN. Residues 81–84 form a G3 region; sequence DCPG. Residues 81–85 and 136–139 contribute to the GTP site; these read DCPGH and NKCD. The G4 stretch occupies residues 136 to 139; that stretch reads NKCD. Residues 174 to 176 form a G5 region; the sequence is SAL.

Belongs to the TRAFAC class translation factor GTPase superfamily. Classic translation factor GTPase family. EF-Tu/EF-1A subfamily. Monomer.

The protein resides in the cytoplasm. It catalyses the reaction GTP + H2O = GDP + phosphate + H(+). Its function is as follows. GTP hydrolase that promotes the GTP-dependent binding of aminoacyl-tRNA to the A-site of ribosomes during protein biosynthesis. This is Elongation factor Tu from Histophilus somni (strain 129Pt) (Haemophilus somnus).